Consider the following 358-residue polypeptide: Alanine racemase (358 aa).

The active-site Proton acceptor; specific for D-alanine is Lys-34. The residue at position 34 (Lys-34) is an N6-(pyridoxal phosphate)lysine. Residue Arg-129 participates in substrate binding. The active-site Proton acceptor; specific for L-alanine is Tyr-254. Met-302 is a binding site for substrate.

This sequence belongs to the alanine racemase family. It depends on pyridoxal 5'-phosphate as a cofactor.

The enzyme catalyses L-alanine = D-alanine. It participates in amino-acid biosynthesis; D-alanine biosynthesis; D-alanine from L-alanine: step 1/1. Functionally, catalyzes the interconversion of L-alanine and D-alanine. May also act on other amino acids. The polypeptide is Alanine racemase (alr) (Vibrio atlanticus (strain LGP32) (Vibrio splendidus (strain Mel32))).